A 658-amino-acid polypeptide reads, in one-letter code: Heat shock 70 kDa protein, mitochondrial (658 aa).

The interval 629–658 (KLDSSASKSSSTENKENKDNTTEAEFTEKK) is disordered. Residues 631–640 (DSSASKSSST) are compositionally biased toward low complexity. Over residues 641–658 (ENKENKDNTTEAEFTEKK) the composition is skewed to basic and acidic residues.

It belongs to the heat shock protein 70 family.

The protein localises to the mitochondrion. Functionally, may function in protein folding and assembly, and disassembly of protein complexes. This chain is Heat shock 70 kDa protein, mitochondrial (mhsp70), found in Dictyostelium discoideum (Social amoeba).